The following is a 353-amino-acid chain: Peptide chain release factor 1 (353 aa).

Glutamine 230 carries the post-translational modification N5-methylglutamine.

This sequence belongs to the prokaryotic/mitochondrial release factor family. Post-translationally, methylated by PrmC. Methylation increases the termination efficiency of RF1.

It is found in the cytoplasm. In terms of biological role, peptide chain release factor 1 directs the termination of translation in response to the peptide chain termination codons UAG and UAA. The chain is Peptide chain release factor 1 from Gluconobacter oxydans (strain 621H) (Gluconobacter suboxydans).